We begin with the raw amino-acid sequence, 202 residues long: ATP-dependent Clp protease proteolytic subunit (202 aa).

The active-site Nucleophile is the serine 106. Histidine 131 is a catalytic residue.

Belongs to the peptidase S14 family. As to quaternary structure, fourteen ClpP subunits assemble into 2 heptameric rings which stack back to back to give a disk-like structure with a central cavity, resembling the structure of eukaryotic proteasomes.

It localises to the cytoplasm. The catalysed reaction is Hydrolysis of proteins to small peptides in the presence of ATP and magnesium. alpha-casein is the usual test substrate. In the absence of ATP, only oligopeptides shorter than five residues are hydrolyzed (such as succinyl-Leu-Tyr-|-NHMec, and Leu-Tyr-Leu-|-Tyr-Trp, in which cleavage of the -Tyr-|-Leu- and -Tyr-|-Trp bonds also occurs).. Cleaves peptides in various proteins in a process that requires ATP hydrolysis. Has a chymotrypsin-like activity. Plays a major role in the degradation of misfolded proteins. This chain is ATP-dependent Clp protease proteolytic subunit, found in Paracidovorax citrulli (strain AAC00-1) (Acidovorax citrulli).